A 105-amino-acid chain; its full sequence is U-scoloptoxin(05)-Sa2a (105 aa).

Residues 1-24 form the signal peptide; the sequence is MKEAVKMSCLCIFLFLFLFSLTDA. The tract at residues 79-105 is disordered; that stretch reads HVPESNQKDGKVSTHMSSCNTDGCNAN. Polar residues predominate over residues 92 to 105; the sequence is THMSSCNTDGCNAN.

This sequence belongs to the scoloptoxin-05 family. Contains 4 disulfide bonds. As to expression, expressed by the venom gland.

Its subcellular location is the secreted. This Scolopendra alternans (Florida Keys giant centipede) protein is U-scoloptoxin(05)-Sa2a.